Reading from the N-terminus, the 105-residue chain is Large ribosomal subunit protein uL24 (105 aa).

It belongs to the universal ribosomal protein uL24 family. Part of the 50S ribosomal subunit.

In terms of biological role, one of two assembly initiator proteins, it binds directly to the 5'-end of the 23S rRNA, where it nucleates assembly of the 50S subunit. Its function is as follows. One of the proteins that surrounds the polypeptide exit tunnel on the outside of the subunit. In Methylocella silvestris (strain DSM 15510 / CIP 108128 / LMG 27833 / NCIMB 13906 / BL2), this protein is Large ribosomal subunit protein uL24.